The sequence spans 194 residues: Fe/S biogenesis protein NfuA (194 aa).

Cys-151 and Cys-154 together coordinate [4Fe-4S] cluster.

The protein belongs to the NfuA family. Homodimer. It depends on [4Fe-4S] cluster as a cofactor.

Involved in iron-sulfur cluster biogenesis. Binds a 4Fe-4S cluster, can transfer this cluster to apoproteins, and thereby intervenes in the maturation of Fe/S proteins. Could also act as a scaffold/chaperone for damaged Fe/S proteins. The protein is Fe/S biogenesis protein NfuA of Mannheimia succiniciproducens (strain KCTC 0769BP / MBEL55E).